Reading from the N-terminus, the 509-residue chain is Proton-gated ion channel subunit pbo-5 (509 aa).

The N-terminal stretch at M1–A21 is a signal peptide. The Extracellular segment spans residues T22–Y275. C193 and C207 are oxidised to a cystine. 3 helical membrane-spanning segments follow: residues M276–A296, L310–P330, and V336–T356. Topologically, residues T357–D487 are cytoplasmic. A helical transmembrane segment spans residues I488 to L508.

This sequence belongs to the ligand-gated ion channel (TC 1.A.9) family. Acetylcholine receptor (TC 1.A.9.1) subfamily. In terms of assembly, the functional channel is a heterooligomer of pbo-5 and pbo-6. May self-associate to form homooligomers with negligible ion channel activity. As to expression, expressed in the posterior body muscles. Also detected in the RIFL, RIFR and RIS head neurons.

The protein resides in the membrane. Forms a proton-gated ion channel with pbo-6 that is activated by acidification of the posterior coelomic space, leading to posterior body wall muscle contraction (pBoc) during the defecation cycle. Probably by regulating the defecation motor program, required for fatty acid uptake by intestinal cells. Does not bind neurotransmitters such as acetylcholine, gamma-aminobutyric acid, glycine, serotonin, glutamate or choline. This Caenorhabditis elegans protein is Proton-gated ion channel subunit pbo-5.